A 468-amino-acid chain; its full sequence is Glutamate--tRNA ligase (468 aa).

Positions 11 to 21 match the 'HIGH' region motif; sequence PSPTGFIHLGN. A 'KMSKS' region motif is present at residues 243 to 247; that stretch reads KMSKR. Lysine 246 is an ATP binding site.

It belongs to the class-I aminoacyl-tRNA synthetase family. Glutamate--tRNA ligase type 1 subfamily. In terms of assembly, monomer.

The protein resides in the cytoplasm. The catalysed reaction is tRNA(Glu) + L-glutamate + ATP = L-glutamyl-tRNA(Glu) + AMP + diphosphate. In terms of biological role, catalyzes the attachment of glutamate to tRNA(Glu) in a two-step reaction: glutamate is first activated by ATP to form Glu-AMP and then transferred to the acceptor end of tRNA(Glu). This chain is Glutamate--tRNA ligase, found in Cupriavidus pinatubonensis (strain JMP 134 / LMG 1197) (Cupriavidus necator (strain JMP 134)).